The following is a 277-amino-acid chain: MGQKVNPHGFRLGITTDHVSHWFADSTKAGQRYKDFVREDIRIRQLMSTGMERAGIAKVEIERTRDRVRVDIHTARPGIVIGRRGAEADRIRGELEKLTGKQVQLNILEVKNPEMEAQLVAQGVAEQLTSRVAFRRAMKKAMQSAQRAGAKGIRIACSGRLGGAEMSRSEFYREGRVPLHTLRANIDYGFYEAKTTFGRIGVKVWIYKGDVTSKELAQQAAAAPSRGRGASDRPGRPGGADRGDRRRRTDRPAAEAAPAAEAPAVEAAAPAVEGGQA.

Residues 43-111 (IRQLMSTGME…QVQLNILEVK (69 aa)) enclose the KH type-2 domain. The segment covering 218–228 (QQAAAAPSRGR) has biased composition (low complexity). The disordered stretch occupies residues 218-277 (QQAAAAPSRGRGASDRPGRPGGADRGDRRRRTDRPAAEAAPAAEAPAVEAAAPAVEGGQA). Residues 229 to 244 (GASDRPGRPGGADRGD) are compositionally biased toward basic and acidic residues. Over residues 254-277 (AEAAPAAEAPAVEAAAPAVEGGQA) the composition is skewed to low complexity.

It belongs to the universal ribosomal protein uS3 family. Part of the 30S ribosomal subunit. Forms a tight complex with proteins S10 and S14.

Functionally, binds the lower part of the 30S subunit head. Binds mRNA in the 70S ribosome, positioning it for translation. The chain is Small ribosomal subunit protein uS3 from Arthrobacter sp. (strain FB24).